The chain runs to 662 residues: Serine/threonine-protein kinase PTK1/STK1 (662 aa).

The interval 35–119 (GNKLKKKASL…SSTSRNLSNS (85 aa)) is disordered. A compositionally biased stretch (low complexity) spans 50 to 60 (STSTNDSESSS). Composition is skewed to polar residues over residues 61–91 (PKLP…SAST) and 98–119 (GSST…LSNS). The 308-residue stretch at 196-503 (DDENKTIGWG…IDDLFEDPWF (308 aa)) folds into the Protein kinase domain. Residues 202 to 210 (IGWGGSCEV) and Lys-226 each bind ATP. Asp-329 functions as the Proton acceptor in the catalytic mechanism. The tract at residues 605–631 (TLTLSEEPPATPAPSAPSAPSARVRGH) is disordered.

The protein belongs to the protein kinase superfamily. Ser/Thr protein kinase family.

It catalyses the reaction L-seryl-[protein] + ATP = O-phospho-L-seryl-[protein] + ADP + H(+). The enzyme catalyses L-threonyl-[protein] + ATP = O-phospho-L-threonyl-[protein] + ADP + H(+). Essential determinant for low-affinity spermidine transport. This Saccharomyces cerevisiae (strain ATCC 204508 / S288c) (Baker's yeast) protein is Serine/threonine-protein kinase PTK1/STK1 (PTK1).